A 269-amino-acid chain; its full sequence is Nuclear egress protein 2 (269 aa).

The Perinuclear space segment spans residues 1–247; that stretch reads MSRRTYVRSE…VWKLALPVAN (247 aa). The helical transmembrane segment at 248 to 268 threads the bilayer; sequence VTYALFIVIVLVVVLGAVLFW. Position 269 (Lys269) is a topological domain, nuclear.

The protein belongs to the herpesviridae NEC2 protein family. As to quaternary structure, forms a heterohexameric complex with NEC1. Phosphorylated.

The protein localises to the host nucleus inner membrane. Plays an essential role in virion nuclear egress, the first step of virion release from infected cell. Within the host nucleus, NEC1 interacts with the newly formed capsid through the vertexes and directs it to the inner nuclear membrane by associating with NEC2. Induces the budding of the capsid at the inner nuclear membrane as well as its envelopment into the perinuclear space. There, the NEC1/NEC2 complex promotes the fusion of the enveloped capsid with the outer nuclear membrane and the subsequent release of the viral capsid into the cytoplasm where it will reach the secondary budding sites in the host Golgi or trans-Golgi network. The chain is Nuclear egress protein 2 from Homo sapiens (Human).